The sequence spans 99 residues: Large ribosomal subunit protein bL21 (99 aa).

It belongs to the bacterial ribosomal protein bL21 family. Part of the 50S ribosomal subunit. Contacts protein L20.

Its function is as follows. This protein binds to 23S rRNA in the presence of protein L20. This Mycoplasmopsis agalactiae (strain NCTC 10123 / CIP 59.7 / PG2) (Mycoplasma agalactiae) protein is Large ribosomal subunit protein bL21.